Consider the following 114-residue polypeptide: Histone H3-3 (114 aa).

Residues 1 to 17 (NTGGKAPRKHIAHKQAK) show a composition bias toward basic residues. The segment at 1-32 (NTGGKAPRKHIAHKQAKKSSAAAATGGVKKPH) is disordered. Residues 18 to 28 (KSSAAAATGGV) are compositionally biased toward low complexity.

The protein belongs to the histone H3 family. The nucleosome is a histone octamer containing two molecules each of H2A, H2B, H3 and H4 assembled in one H3-H4 heterotetramer and two H2A-H2B heterodimers. The octamer wraps approximately 147 bp of DNA.

Its subcellular location is the nucleus. It is found in the chromosome. In terms of biological role, core component of nucleosome. Nucleosomes wrap and compact DNA into chromatin, limiting DNA accessibility to the cellular machineries which require DNA as a template. Histones thereby play a central role in transcription regulation, DNA repair, DNA replication and chromosomal stability. DNA accessibility is regulated via a complex set of post-translational modifications of histones, also called histone code, and nucleosome remodeling. This is Histone H3-3 (H3-3) from Stylonychia lemnae (Ciliate).